A 739-amino-acid chain; its full sequence is Polyribonucleotide nucleotidyltransferase (739 aa).

Residues Asp-487 and Asp-493 each coordinate Mg(2+). Positions 554-613 (PRIETMQIPTDKIRDVIGTGGKVIREIVEKTGAKINIEDTGVVKIASADGKAIKAAYNWI) constitute a KH domain. The S1 motif domain occupies 623-691 (GVIYDGTIVK…DRGKIRLSMK (69 aa)). Residues 694–739 (DQQTGEDITDKIKAQRDAERAERGDEPREPREGGRHRGERRREAGE) are disordered. Over residues 701–739 (ITDKIKAQRDAERAERGDEPREPREGGRHRGERRREAGE) the composition is skewed to basic and acidic residues.

This sequence belongs to the polyribonucleotide nucleotidyltransferase family. Mg(2+) serves as cofactor.

The protein resides in the cytoplasm. The catalysed reaction is RNA(n+1) + phosphate = RNA(n) + a ribonucleoside 5'-diphosphate. Its function is as follows. Involved in mRNA degradation. Catalyzes the phosphorolysis of single-stranded polyribonucleotides processively in the 3'- to 5'-direction. This chain is Polyribonucleotide nucleotidyltransferase, found in Methylobacterium radiotolerans (strain ATCC 27329 / DSM 1819 / JCM 2831 / NBRC 15690 / NCIMB 10815 / 0-1).